Consider the following 431-residue polypeptide: Adenylosuccinate synthetase (431 aa).

GTP contacts are provided by residues 12 to 18 (GDEGKGK) and 40 to 42 (GHT). Asp13 (proton acceptor) is an active-site residue. The Mg(2+) site is built by Asp13 and Gly40. Residues 13-16 (DEGK), 38-41 (NAGH), Thr129, Arg143, Gln224, and Thr239 each bind IMP. His41 functions as the Proton donor in the catalytic mechanism. Residue Lys292 forms an Isoglutamyl lysine isopeptide (Lys-Gln) (interchain with Q-Cter in protein Pup) linkage. 299–305 (VTTGRAR) contributes to the substrate binding site. Residue Arg303 coordinates IMP. GTP contacts are provided by residues Arg305, 331-333 (KLD), and 413-415 (GVG).

It belongs to the adenylosuccinate synthetase family. As to quaternary structure, homodimer. Mg(2+) is required as a cofactor.

Its subcellular location is the cytoplasm. The enzyme catalyses IMP + L-aspartate + GTP = N(6)-(1,2-dicarboxyethyl)-AMP + GDP + phosphate + 2 H(+). Its pathway is purine metabolism; AMP biosynthesis via de novo pathway; AMP from IMP: step 1/2. Its function is as follows. Plays an important role in the de novo pathway of purine nucleotide biosynthesis. Catalyzes the first committed step in the biosynthesis of AMP from IMP. This is Adenylosuccinate synthetase from Mycolicibacterium smegmatis (strain ATCC 700084 / mc(2)155) (Mycobacterium smegmatis).